A 644-amino-acid chain; its full sequence is 1-deoxy-D-xylulose-5-phosphate synthase (644 aa).

Thiamine diphosphate-binding positions include histidine 72 and 113–115; that span reads GHA. Aspartate 144 contacts Mg(2+). Residues 145-146, asparagine 174, tyrosine 287, and glutamate 370 contribute to the thiamine diphosphate site; that span reads GA. Asparagine 174 lines the Mg(2+) pocket.

The protein belongs to the transketolase family. DXPS subfamily. In terms of assembly, homodimer. Mg(2+) serves as cofactor. Requires thiamine diphosphate as cofactor.

It carries out the reaction D-glyceraldehyde 3-phosphate + pyruvate + H(+) = 1-deoxy-D-xylulose 5-phosphate + CO2. Its pathway is metabolic intermediate biosynthesis; 1-deoxy-D-xylulose 5-phosphate biosynthesis; 1-deoxy-D-xylulose 5-phosphate from D-glyceraldehyde 3-phosphate and pyruvate: step 1/1. In terms of biological role, catalyzes the acyloin condensation reaction between C atoms 2 and 3 of pyruvate and glyceraldehyde 3-phosphate to yield 1-deoxy-D-xylulose-5-phosphate (DXP). This is 1-deoxy-D-xylulose-5-phosphate synthase from Prochlorococcus marinus (strain MIT 9303).